The sequence spans 557 residues: Hdr-like menaquinol oxidoreductase iron-sulfur subunit (557 aa).

4Fe-4S ferredoxin-type domains lie at 86–115 and 155–184; these read RAFK…GDPK and KEWY…AEVV. Positions 95, 98, 101, 105, 164, 167, 170, and 174 each coordinate [4Fe-4S] cluster.

Requires [4Fe-4S] cluster as cofactor.

It localises to the membrane. Its function is as follows. Has menaquinol-oxidizing activity. The HmeC and HmeD subunits may together mediate electron transfer from menaquinol to an unidentified electron acceptor on the cytoplasmic side of the membrane. In Archaeoglobus profundus (strain DSM 5631 / JCM 9629 / NBRC 100127 / Av18), this protein is Hdr-like menaquinol oxidoreductase iron-sulfur subunit (hmeD).